The following is a 226-amino-acid chain: MASFLSRLPQGKVVAALIVLLLVVDQVIKIWVKTTMVLGQSHVVAPWFQIHFVENPGMAFGIELGSKLFLSLFRIVAMGFCIYLLAKLVRKREHTLAFLSCLSLIIAGGIGNIIDSIFYGVIFSGSHGQIAQLFPSGGGYETWFHGRVVDMFYFPLIEGVFPSWLPFWGGEEFVFFHPVFNFADSCISIGLILLLVCYPRTVSLLLDGKKTLPEGTTEDSEPTKRE.

Transmembrane regions (helical) follow at residues 12–32 (KVVA…KIWV), 69–89 (FLSL…AKLV), and 103–123 (SLII…GVIF). Catalysis depends on residues D150 and D184. A helical membrane pass occupies residues 173–193 (FVFFHPVFNFADSCISIGLIL).

This sequence belongs to the peptidase A8 family.

It is found in the cell inner membrane. The enzyme catalyses Release of signal peptides from bacterial membrane prolipoproteins. Hydrolyzes -Xaa-Yaa-Zaa-|-(S,diacylglyceryl)Cys-, in which Xaa is hydrophobic (preferably Leu), and Yaa (Ala or Ser) and Zaa (Gly or Ala) have small, neutral side chains.. The protein operates within protein modification; lipoprotein biosynthesis (signal peptide cleavage). In terms of biological role, this protein specifically catalyzes the removal of signal peptides from prolipoproteins. In Porphyromonas gingivalis (strain ATCC 33277 / DSM 20709 / CIP 103683 / JCM 12257 / NCTC 11834 / 2561), this protein is Lipoprotein signal peptidase.